A 550-amino-acid chain; its full sequence is Arginine--tRNA ligase (550 aa).

Positions 122-132 (GNPTGPLHLAH) match the 'HIGH' region motif.

Belongs to the class-I aminoacyl-tRNA synthetase family. Monomer.

The protein localises to the cytoplasm. It catalyses the reaction tRNA(Arg) + L-arginine + ATP = L-arginyl-tRNA(Arg) + AMP + diphosphate. The chain is Arginine--tRNA ligase from Tropheryma whipplei (strain TW08/27) (Whipple's bacillus).